Consider the following 139-residue polypeptide: Putative nickel-responsive regulator (139 aa).

Positions 79, 90, 92, and 98 each coordinate Ni(2+).

The protein belongs to the transcriptional regulatory CopG/NikR family. It depends on Ni(2+) as a cofactor.

In terms of biological role, transcriptional regulator. This chain is Putative nickel-responsive regulator, found in Lawsonia intracellularis (strain PHE/MN1-00).